The primary structure comprises 152 residues: MKKQERQRYIKRLLSSNEIERQEDFVKLLRAEDIDVTQATISRDIKDMQLVKVPSATGGYHYSMPVQKQMDTEKKLKRTLKDAYVSYATQDKFVLIKVLPGNGPALATLIEAMHYDEIFGTLGDDAHVLIICKSLAMTLELQQKIQRLLSDH.

It belongs to the ArgR family.

Its subcellular location is the cytoplasm. It participates in amino-acid biosynthesis; L-arginine biosynthesis [regulation]. In terms of biological role, regulates arginine biosynthesis genes. This chain is Arginine repressor, found in Lactiplantibacillus plantarum (strain ATCC BAA-793 / NCIMB 8826 / WCFS1) (Lactobacillus plantarum).